Reading from the N-terminus, the 374-residue chain is Glutamate 5-kinase (374 aa).

Lys-16 is a binding site for ATP. Substrate-binding residues include Ser-56, Asp-143, and Asn-155. 175–176 lines the ATP pocket; it reads TD. Residues 282 to 360 form the PUA domain; that stretch reads RGRVVLDAGA…SEIEAVLGYV (79 aa).

It belongs to the glutamate 5-kinase family.

The protein localises to the cytoplasm. It carries out the reaction L-glutamate + ATP = L-glutamyl 5-phosphate + ADP. The protein operates within amino-acid biosynthesis; L-proline biosynthesis; L-glutamate 5-semialdehyde from L-glutamate: step 1/2. Functionally, catalyzes the transfer of a phosphate group to glutamate to form L-glutamate 5-phosphate. The polypeptide is Glutamate 5-kinase (Ralstonia pickettii (strain 12J)).